Reading from the N-terminus, the 177-residue chain is Large ribosomal subunit protein uL6 (177 aa).

It belongs to the universal ribosomal protein uL6 family. In terms of assembly, part of the 50S ribosomal subunit.

In terms of biological role, this protein binds to the 23S rRNA, and is important in its secondary structure. It is located near the subunit interface in the base of the L7/L12 stalk, and near the tRNA binding site of the peptidyltransferase center. This Zymomonas mobilis subsp. mobilis (strain ATCC 31821 / ZM4 / CP4) protein is Large ribosomal subunit protein uL6.